The chain runs to 379 residues: Chaperone protein DnaJ (379 aa).

The J domain maps to 5 to 70; it reads DYYELLEVSR…QKRAAYDQFG (66 aa). Residues 135 to 213 form a CR-type zinc finger; the sequence is GKEVEITVPR…CHGQGRVRES (79 aa). Zn(2+)-binding residues include C148, C151, C165, C168, C187, C190, C201, and C204. 4 CXXCXGXG motif repeats span residues 148–155, 165–172, 187–194, and 201–208; these read CTVCEGSG, CETCQGMG, CPTCHGEG, and CASCHGQG.

The protein belongs to the DnaJ family. In terms of assembly, homodimer. The cofactor is Zn(2+).

The protein resides in the cytoplasm. Functionally, participates actively in the response to hyperosmotic and heat shock by preventing the aggregation of stress-denatured proteins and by disaggregating proteins, also in an autonomous, DnaK-independent fashion. Unfolded proteins bind initially to DnaJ; upon interaction with the DnaJ-bound protein, DnaK hydrolyzes its bound ATP, resulting in the formation of a stable complex. GrpE releases ADP from DnaK; ATP binding to DnaK triggers the release of the substrate protein, thus completing the reaction cycle. Several rounds of ATP-dependent interactions between DnaJ, DnaK and GrpE are required for fully efficient folding. Also involved, together with DnaK and GrpE, in the DNA replication of plasmids through activation of initiation proteins. This is Chaperone protein DnaJ from Legionella pneumophila (strain Lens).